The primary structure comprises 372 residues: DNA replication and repair protein RecF (372 aa).

30–37 provides a ligand contact to ATP; the sequence is GENGQGKT.

This sequence belongs to the RecF family.

Its subcellular location is the cytoplasm. The RecF protein is involved in DNA metabolism; it is required for DNA replication and normal SOS inducibility. RecF binds preferentially to single-stranded, linear DNA. It also seems to bind ATP. This is DNA replication and repair protein RecF from Anaeromyxobacter sp. (strain K).